Consider the following 452-residue polypeptide: Tripartite motif-containing protein 49 (452 aa).

The RING-type zinc finger occupies 15 to 56 (CPLCMNYFIDPVTIDCGHSFCRPCFYLNWQDIPFLVQCSECT). The B box-type zinc-finger motif lies at 88–129 (SEEQMCGTHRETKKIFCEVDRSLLCLLCSSSQEHRYHRHRPI). Residues C93, H96, C115, and H121 each coordinate Zn(2+). One can recognise a B30.2/SPRY domain in the interval 269-452 (ELSAGPITGL…LRPIFCCIHF (184 aa)).

Belongs to the TRIM/RBCC family. As to expression, preferentially expressed in testis.

The polypeptide is Tripartite motif-containing protein 49 (TRIM49) (Homo sapiens (Human)).